Consider the following 256-residue polypeptide: Alcohol dehydrogenase (256 aa).

An NAD(+)-binding site is contributed by 12 to 35 (FVAGLGGIGLDTSREIVKAGPKNL). Serine 140 contacts substrate. Catalysis depends on tyrosine 153, which acts as the Proton acceptor.

Belongs to the short-chain dehydrogenases/reductases (SDR) family. In terms of assembly, homodimer.

The enzyme catalyses a primary alcohol + NAD(+) = an aldehyde + NADH + H(+). The catalysed reaction is a secondary alcohol + NAD(+) = a ketone + NADH + H(+). The sequence is that of Alcohol dehydrogenase (Adh) from Zaprionus tuberculatus (Vinegar fly).